Consider the following 399-residue polypeptide: Glutathione-independent formaldehyde dehydrogenase (399 aa).

Residue cysteine 47 coordinates Zn(2+). Residues glycine 48, serine 49, and histidine 52 each contribute to the NAD(+) site. Residues histidine 68, cysteine 98, cysteine 101, cysteine 104, cysteine 112, and aspartate 170 each coordinate Zn(2+). Positions 198, 218, 223, 263, 268, 270, 300, 302, 337, and 339 each coordinate NAD(+).

It belongs to the zinc-containing alcohol dehydrogenase family. As to quaternary structure, homotetramer. The cofactor is Zn(2+).

It catalyses the reaction formaldehyde + NAD(+) + H2O = formate + NADH + 2 H(+). The enzyme catalyses acetaldehyde + NAD(+) + H2O = acetate + NADH + 2 H(+). The catalysed reaction is 2 formaldehyde + H2O = methanol + formate + H(+). With respect to regulation, inactivated by bipyridine and p-chloromercuribenzoate. Functionally, dehydrogenase that catalyzes the NAD(+)-dependent oxidation of formaldehyde and acetaldehyde, and, to a lesser extent, long-chain alcohols, but is inactive against propionaldehyde, butyraldehyde, methanol and ethanol. Can also catalyze the dismutation of a wide range of aldehydes such as formaldehyde. In Pseudomonas putida (Arthrobacter siderocapsulatus), this protein is Glutathione-independent formaldehyde dehydrogenase.